We begin with the raw amino-acid sequence, 130 residues long: MVRMNVLADALRSICNAEKRCKRQVLIRPCSKVTVKFLMVMMKHGYIGEFEIVDDHRGGKIIVNLNGRLNKCGVISPRFDVPINEMEKWTSNLLPSRQFGYVVLTTSGGIMDHEEARRKHVGGKILGFFF.

Belongs to the universal ribosomal protein uS8 family.

This Strongylocentrotus purpuratus (Purple sea urchin) protein is Small ribosomal subunit protein uS8 (RPS15A).